The sequence spans 236 residues: uncharacterized protein (236 aa).

The interval 1–29 (MNNEKNKQDRENLNRQDERKSSEIKSERK) is disordered.

This is an uncharacterized protein from Staphylococcus aureus.